The primary structure comprises 287 residues: MGIRAFRPYTPGTRERVVSDYAEITRNEPEKSLLVSKHRRKGRNNRGVITCRHRGGGHKRLYRIIDFKRDKRNVPGKIVSIEYDPNRNARISLVYYEDGEKRYILTPAGVHVGTPIIAGDETPIEVGNAMPLQNIPLGTTVHNVELVAGKGGQIVRAAGASAQVVAKEGNYVALKLPSTEVRLVRKECYATIGAVGNAEVRNTSLGKAGRKRWLGRRPEVRGSVMNPVDHPHGGGEGRAPIGRSGPVTPWGKPALGRKTRKKNKQSDCLIQRRRRKSSKRGRGGRDA.

The interval 216 to 287 (RRPEVRGSVM…SKRGRGGRDA (72 aa)) is disordered. The span at 271 to 287 (QRRRRKSSKRGRGGRDA) shows a compositional bias: basic residues.

Belongs to the universal ribosomal protein uL2 family. In terms of assembly, part of the 50S ribosomal subunit. Forms a bridge to the 30S subunit in the 70S ribosome.

One of the primary rRNA binding proteins. Required for association of the 30S and 50S subunits to form the 70S ribosome, for tRNA binding and peptide bond formation. It has been suggested to have peptidyltransferase activity; this is somewhat controversial. Makes several contacts with the 16S rRNA in the 70S ribosome. This Synechococcus sp. (strain ATCC 27144 / PCC 6301 / SAUG 1402/1) (Anacystis nidulans) protein is Large ribosomal subunit protein uL2.